A 458-amino-acid polypeptide reads, in one-letter code: Adenylosuccinate synthetase (458 aa).

GTP is bound by residues 17–23 (GDEGKGK) and 45–47 (GHT). The active-site Proton acceptor is Asp18. Positions 18 and 45 each coordinate Mg(2+). IMP-binding positions include 18–21 (DEGK), 43–46 (NAGH), Thr137, Arg151, Gln247, Thr262, and Arg330. Catalysis depends on His46, which acts as the Proton donor. Position 326–332 (326–332 (VTTGRSR)) interacts with substrate. GTP contacts are provided by residues Arg332, 358–360 (KLD), and 440–442 (STG).

This sequence belongs to the adenylosuccinate synthetase family. In terms of assembly, homodimer. The cofactor is Mg(2+).

It localises to the cytoplasm. The catalysed reaction is IMP + L-aspartate + GTP = N(6)-(1,2-dicarboxyethyl)-AMP + GDP + phosphate + 2 H(+). The protein operates within purine metabolism; AMP biosynthesis via de novo pathway; AMP from IMP: step 1/2. Functionally, plays an important role in the de novo pathway of purine nucleotide biosynthesis. Catalyzes the first committed step in the biosynthesis of AMP from IMP. This chain is Adenylosuccinate synthetase, found in Albidiferax ferrireducens (strain ATCC BAA-621 / DSM 15236 / T118) (Rhodoferax ferrireducens).